A 471-amino-acid chain; its full sequence is Glutamate--tRNA ligase (471 aa).

Residues 9 to 19 carry the 'HIGH' region motif; sequence PSPTGYLHVGG. Zn(2+) is bound by residues Cys-98, Cys-100, Cys-125, and His-127. Residues 237-241 carry the 'KMSKS' region motif; that stretch reads KLSKR. Lys-240 is a binding site for ATP.

The protein belongs to the class-I aminoacyl-tRNA synthetase family. Glutamate--tRNA ligase type 1 subfamily. As to quaternary structure, monomer. Zn(2+) is required as a cofactor.

The protein localises to the cytoplasm. The enzyme catalyses tRNA(Glu) + L-glutamate + ATP = L-glutamyl-tRNA(Glu) + AMP + diphosphate. Functionally, catalyzes the attachment of glutamate to tRNA(Glu) in a two-step reaction: glutamate is first activated by ATP to form Glu-AMP and then transferred to the acceptor end of tRNA(Glu). The sequence is that of Glutamate--tRNA ligase from Salmonella schwarzengrund (strain CVM19633).